The chain runs to 182 residues: Flavodoxin (182 aa).

The 170-residue stretch at 4–173 (IGLFFGSDTG…RLKGWLSLIA (170 aa)) folds into the Flavodoxin-like domain.

This sequence belongs to the flavodoxin family. Requires FMN as cofactor.

Functionally, low-potential electron donor to a number of redox enzymes. NifF is the electron donor to nitrogenase. The sequence is that of Flavodoxin (nifF) from Rhodobacter capsulatus (strain ATCC BAA-309 / NBRC 16581 / SB1003).